Consider the following 321-residue polypeptide: tRNA-dihydrouridine synthase B (321 aa).

Residues 16 to 18 (PMA) and Gln-70 each bind FMN. Cys-100 acts as the Proton donor in catalysis. FMN is bound by residues Lys-139, 200 to 202 (NGD), and 224 to 225 (GR).

The protein belongs to the Dus family. DusB subfamily. FMN is required as a cofactor.

The enzyme catalyses a 5,6-dihydrouridine in tRNA + NAD(+) = a uridine in tRNA + NADH + H(+). It catalyses the reaction a 5,6-dihydrouridine in tRNA + NADP(+) = a uridine in tRNA + NADPH + H(+). Its function is as follows. Catalyzes the synthesis of 5,6-dihydrouridine (D), a modified base found in the D-loop of most tRNAs, via the reduction of the C5-C6 double bond in target uridines. The protein is tRNA-dihydrouridine synthase B of Pectobacterium carotovorum (Erwinia carotovora).